We begin with the raw amino-acid sequence, 225 residues long: Chlorosome protein J (225 aa).

Residues 1-95 (MIIYINDKPC…TIRVLTRAEK (95 aa)) form the 2Fe-2S ferredoxin-type domain. [2Fe-2S] cluster-binding residues include Cys-33, Cys-39, Cys-42, and Cys-77.

[2Fe-2S] cluster serves as cofactor.

It localises to the chlorosome. Functionally, could play a direct role in the oxidation or reduction of the quenching species formed in the chlorosome. This Chlorobaculum tepidum (strain ATCC 49652 / DSM 12025 / NBRC 103806 / TLS) (Chlorobium tepidum) protein is Chlorosome protein J (csmJ).